We begin with the raw amino-acid sequence, 259 residues long: Thiazole synthase (259 aa).

Lysine 98 serves as the catalytic Schiff-base intermediate with DXP. 1-deoxy-D-xylulose 5-phosphate-binding positions include glycine 159, 185-186, and 207-208; these read AG and NS.

The protein belongs to the ThiG family. As to quaternary structure, homotetramer. Forms heterodimers with either ThiH or ThiS.

It localises to the cytoplasm. It carries out the reaction [ThiS sulfur-carrier protein]-C-terminal-Gly-aminoethanethioate + 2-iminoacetate + 1-deoxy-D-xylulose 5-phosphate = [ThiS sulfur-carrier protein]-C-terminal Gly-Gly + 2-[(2R,5Z)-2-carboxy-4-methylthiazol-5(2H)-ylidene]ethyl phosphate + 2 H2O + H(+). It functions in the pathway cofactor biosynthesis; thiamine diphosphate biosynthesis. Its function is as follows. Catalyzes the rearrangement of 1-deoxy-D-xylulose 5-phosphate (DXP) to produce the thiazole phosphate moiety of thiamine. Sulfur is provided by the thiocarboxylate moiety of the carrier protein ThiS. In vitro, sulfur can be provided by H(2)S. The sequence is that of Thiazole synthase from Chlorobaculum tepidum (strain ATCC 49652 / DSM 12025 / NBRC 103806 / TLS) (Chlorobium tepidum).